Reading from the N-terminus, the 399-residue chain is Elongation factor Tu (399 aa).

Residues 10–209 enclose the tr-type G domain; that stretch reads KPHVNIGTIG…KVDEYIPTPV (200 aa). The segment at 19–26 is G1; it reads GHVDHGKT. Residue 19–26 participates in GTP binding; it reads GHVDHGKT. T26 lines the Mg(2+) pocket. Positions 60-64 are G2; the sequence is GITIA. Positions 81 to 84 are G3; it reads DCPG. Residues 81 to 85 and 136 to 139 each bind GTP; these read DCPGH and NKAD. A G4 region spans residues 136-139; it reads NKAD. Positions 174–176 are G5; the sequence is SAL.

This sequence belongs to the TRAFAC class translation factor GTPase superfamily. Classic translation factor GTPase family. EF-Tu/EF-1A subfamily. In terms of assembly, monomer.

It is found in the cytoplasm. It catalyses the reaction GTP + H2O = GDP + phosphate + H(+). Functionally, GTP hydrolase that promotes the GTP-dependent binding of aminoacyl-tRNA to the A-site of ribosomes during protein biosynthesis. This is Elongation factor Tu from Campylobacter curvus (strain 525.92).